We begin with the raw amino-acid sequence, 689 residues long: Solute carrier family 22 member 23 (689 aa).

Disordered stretches follow at residues Met1 to Ala55 and Thr162 to Asn188. Asn24 is a glycosylation site (N-linked (GlcNAc...) asparagine). Residues Trp165–Thr177 show a composition bias toward polar residues. Helical transmembrane passes span Phe229 to Val249 and Pro253 to Val273. N-linked (GlcNAc...) asparagine glycosylation occurs at Asn274. Transmembrane regions (helical) follow at residues Phe283–Leu303, Phe310–Leu330, Val339–Pro359, Thr466–Gly486, Gly489–Leu509, Ile541–Phe561, Cys572–Ile592, and Phe601–Leu621.

This sequence belongs to the major facilitator (TC 2.A.1) superfamily. Organic cation transporter (TC 2.A.1.19) family.

The protein resides in the membrane. This chain is Solute carrier family 22 member 23 (Slc22a23), found in Mus musculus (Mouse).